The chain runs to 307 residues: Ribosomal protein L11 methyltransferase (307 aa).

The S-adenosyl-L-methionine site is built by threonine 156, glycine 177, aspartate 199, and asparagine 243.

Belongs to the methyltransferase superfamily. PrmA family.

Its subcellular location is the cytoplasm. It carries out the reaction L-lysyl-[protein] + 3 S-adenosyl-L-methionine = N(6),N(6),N(6)-trimethyl-L-lysyl-[protein] + 3 S-adenosyl-L-homocysteine + 3 H(+). Its function is as follows. Methylates ribosomal protein L11. This Syntrophomonas wolfei subsp. wolfei (strain DSM 2245B / Goettingen) protein is Ribosomal protein L11 methyltransferase.